A 493-amino-acid chain; its full sequence is Geraniol 8-hydroxylase (493 aa).

The Lumenal segment spans residues 1–6 (MDYLTI). The chain crosses the membrane as a helical span at residues 7–23 (ILTLLFALTLYEAFSYL). Residues 24–493 (SRRTKNLPPG…HPLRAVPSTL (470 aa)) lie on the Cytoplasmic side of the membrane. Cys436 contacts heme.

This sequence belongs to the cytochrome P450 family. It depends on heme as a cofactor. As to expression, expressed in roots, stems, leaves and flower buds. Hardly detected in mature flowers and fruits. Expressed in the internal phloem-associated parenchyma.

It localises to the endoplasmic reticulum membrane. It catalyses the reaction (2E)-geraniol + reduced [NADPH--hemoprotein reductase] + O2 = (6E)-8-hydroxygeraniol + oxidized [NADPH--hemoprotein reductase] + H2O + H(+). Functionally, hydroxylase involved in the biosynthesis of hydroxygeraniol, a precursor of the terpenoid indole alkaloids such as vinblastine and vincristine. Also able to hydroxylate in vitro nerol and to catalyze 3'-hydroxylation of the flavanone naringenin to form eriodictyol. No activity with apigenin, kaempferol, p-coumaric acid and ferulic acid as substrates. This Catharanthus roseus (Madagascar periwinkle) protein is Geraniol 8-hydroxylase (CYP76B6).